The primary structure comprises 338 residues: RNA 3'-terminal phosphate cyclase (338 aa).

ATP contacts are provided by residues Gln-103 and 283–287 (YLADQ). His-308 functions as the Tele-AMP-histidine intermediate in the catalytic mechanism.

This sequence belongs to the RNA 3'-terminal cyclase family. Type 1 subfamily.

It is found in the cytoplasm. The enzyme catalyses a 3'-end 3'-phospho-ribonucleotide-RNA + ATP = a 3'-end 2',3'-cyclophospho-ribonucleotide-RNA + AMP + diphosphate. Catalyzes the conversion of 3'-phosphate to a 2',3'-cyclic phosphodiester at the end of RNA. The mechanism of action of the enzyme occurs in 3 steps: (A) adenylation of the enzyme by ATP; (B) transfer of adenylate to an RNA-N3'P to produce RNA-N3'PP5'A; (C) and attack of the adjacent 2'-hydroxyl on the 3'-phosphorus in the diester linkage to produce the cyclic end product. The biological role of this enzyme is unknown but it is likely to function in some aspects of cellular RNA processing. This Escherichia coli O9:H4 (strain HS) protein is RNA 3'-terminal phosphate cyclase.